A 420-amino-acid chain; its full sequence is Probable endo-beta-1,4-glucanase celB (420 aa).

The N-terminal stretch at 1-18 is a signal peptide; it reads MLRKLTPLALALLPLVAG. N118 carries an N-linked (GlcNAc...) asparagine glycan. The active-site Nucleophile is E215. Catalysis depends on E220, which acts as the Proton donor. N-linked (GlcNAc...) asparagine glycosylation is found at N234, N293, and N383.

It belongs to the glycosyl hydrolase 7 (cellulase C) family.

The protein localises to the secreted. It catalyses the reaction Endohydrolysis of (1-&gt;4)-beta-D-glucosidic linkages in cellulose, lichenin and cereal beta-D-glucans.. In terms of biological role, has endoglucanase activity on substrates containing beta-1,4 glycosidic bonds, like in carboxymethylcellulose (CMC), hydroxyethylcellulose (HEC) and beta-glucan. Involved in the degradation of complex natural cellulosic substrates. The protein is Probable endo-beta-1,4-glucanase celB (celB) of Aspergillus terreus (strain NIH 2624 / FGSC A1156).